The chain runs to 240 residues: Thyroid transcription factor 1-associated protein 26 (240 aa).

The segment at 104-181 (LRKQQRKAGL…QEEYERVQAK (78 aa)) is disordered. The span at 131–149 (TEQTSSEEPPGGHQPQPEE) shows a compositional bias: low complexity. A compositionally biased stretch (basic and acidic residues) spans 171–181 (AQEEYERVQAK).

This sequence belongs to the TAP26 family. In terms of assembly, interacts with NKX2-1.

The protein resides in the nucleus. Functionally, component of the transcription complexes of the pulmonary surfactant-associated protein-B (SFTPB) and -C (SFTPC). Enhances homeobox protein Nkx-2.1-activated SFTPB and SFTPC promoter activities. The chain is Thyroid transcription factor 1-associated protein 26 (Ccdc59) from Mus musculus (Mouse).